Here is a 183-residue protein sequence, read N- to C-terminus: Pectinesterase inhibitor 8 (183 aa).

An N-terminal signal peptide occupies residues 1-30 (MAQRASRRPAAAAAAVVVAVVLAVSGGVGA). Disulfide bonds link cysteine 36–cysteine 51 and cysteine 107–cysteine 147.

Belongs to the PMEI family.

The protein resides in the secreted. It is found in the extracellular space. It localises to the apoplast. In terms of biological role, pectin methylesterase (PME) inhibitor that inhibits PME in vitro. The chain is Pectinesterase inhibitor 8 from Oryza sativa subsp. japonica (Rice).